We begin with the raw amino-acid sequence, 229 residues long: Large ribosomal subunit protein uL1c (229 aa).

Belongs to the universal ribosomal protein uL1 family. In terms of assembly, part of the 50S ribosomal subunit.

Its subcellular location is the plastid. It localises to the chloroplast. Binds directly to 23S rRNA. Might be involved in E site tRNA release (Potential). The protein is Large ribosomal subunit protein uL1c (rpl1) of Pyropia yezoensis (Susabi-nori).